Consider the following 331-residue polypeptide: Phosphoribosylformylglycinamidine cyclo-ligase (331 aa).

Belongs to the AIR synthase family.

It localises to the cytoplasm. The enzyme catalyses 2-formamido-N(1)-(5-O-phospho-beta-D-ribosyl)acetamidine + ATP = 5-amino-1-(5-phospho-beta-D-ribosyl)imidazole + ADP + phosphate + H(+). The protein operates within purine metabolism; IMP biosynthesis via de novo pathway; 5-amino-1-(5-phospho-D-ribosyl)imidazole from N(2)-formyl-N(1)-(5-phospho-D-ribosyl)glycinamide: step 2/2. The polypeptide is Phosphoribosylformylglycinamidine cyclo-ligase (Clostridium botulinum (strain Langeland / NCTC 10281 / Type F)).